The following is a 485-amino-acid chain: Probable coniferyl aldehyde dehydrogenase (485 aa).

Active-site residues include E226 and C260.

It belongs to the aldehyde dehydrogenase family.

It catalyses the reaction (E)-coniferaldehyde + NADP(+) + H2O = (E)-ferulate + NADPH + 2 H(+). The enzyme catalyses (E)-coniferaldehyde + NAD(+) + H2O = (E)-ferulate + NADH + 2 H(+). The polypeptide is Probable coniferyl aldehyde dehydrogenase (calB) (Caulobacter vibrioides (strain ATCC 19089 / CIP 103742 / CB 15) (Caulobacter crescentus)).